Consider the following 231-residue polypeptide: Chlorophyll a-b binding protein 1B-20, chloroplastic (231 aa).

A disordered region spans residues 1–25; sequence RIQAYRFRTRVPPSPAASGSPRSTR. A chloroplast-targeting transit peptide spans 1–31; sequence RIQAYRFRTRVPPSPAASGSPRSTRRDVAVQ. Tryptophan 36 lines the chlorophyll b pocket. Chlorophyll a is bound at residue phenylalanine 56. Chlorophyll b is bound by residues arginine 80, serine 118, glutamate 133, and arginine 136. Chlorophyll a-binding residues include lysine 182, glutamate 183, asparagine 186, arginine 188, glutamine 200, and histidine 215. A helical membrane pass occupies residues 183-199; the sequence is ELANGRLAMLAFLGFLV.

It belongs to the light-harvesting chlorophyll a/b-binding (LHC) protein family. The LHC complex consists of chlorophyll a-b binding proteins. The cofactor is Binds at least 14 chlorophylls (8 Chl-a and 6 Chl-b) and carotenoids such as lutein and neoxanthin.. Post-translationally, photoregulated by reversible phosphorylation of its threonine residues.

The protein localises to the plastid. The protein resides in the chloroplast thylakoid membrane. The light-harvesting complex (LHC) functions as a light receptor, it captures and delivers excitation energy to photosystems with which it is closely associated. This Hordeum vulgare (Barley) protein is Chlorophyll a-b binding protein 1B-20, chloroplastic (LHC Ib-20).